The sequence spans 458 residues: ATP synthase subunit beta (458 aa).

148–155 contributes to the ATP binding site; the sequence is GGAGVGKT.

This sequence belongs to the ATPase alpha/beta chains family. In terms of assembly, F-type ATPases have 2 components, CF(1) - the catalytic core - and CF(0) - the membrane proton channel. CF(1) has five subunits: alpha(3), beta(3), gamma(1), delta(1), epsilon(1). CF(0) has three main subunits: a(1), b(2) and c(9-12). The alpha and beta chains form an alternating ring which encloses part of the gamma chain. CF(1) is attached to CF(0) by a central stalk formed by the gamma and epsilon chains, while a peripheral stalk is formed by the delta and b chains.

The protein localises to the cell inner membrane. The enzyme catalyses ATP + H2O + 4 H(+)(in) = ADP + phosphate + 5 H(+)(out). In terms of biological role, produces ATP from ADP in the presence of a proton gradient across the membrane. The catalytic sites are hosted primarily by the beta subunits. This Pseudomonas fluorescens (strain SBW25) protein is ATP synthase subunit beta.